The sequence spans 216 residues: uncharacterized protein (216 aa).

The chain crosses the membrane as a helical span at residues methionine 1–phenylalanine 21.

The protein localises to the membrane. This is an uncharacterized protein from Saccharomyces cerevisiae (strain ATCC 204508 / S288c) (Baker's yeast).